Reading from the N-terminus, the 407-residue chain is Patatin-like protein 2 (407 aa).

The region spanning 22–228 (LSIDGGGIRG…AANNPALLAI (207 aa)) is the PNPLA domain. The GXGXXG signature appears at 26 to 31 (GGGIRG). The GXSXG signature appears at 64–68 (GTSTG). S66 functions as the Nucleophile in the catalytic mechanism. D215 (proton acceptor) is an active-site residue. Residues 215–217 (DGG) carry the DGA/G motif. At S398 the chain carries Phosphoserine.

Belongs to the patatin family. As to expression, expressed specifically in roots.

The protein resides in the cytoplasm. Its function is as follows. Possesses non-specific lipolytic acyl hydrolase (LAH) activity. Catalyzes the hydrolysis of the galactolipids monogalactosyldiacylglycerol (MGDG) and digalactosyldiacylglycerol (DGDG), and less efficiently the phoshpolipids phosphatidylcholine (PC), phosphatidylethanolamine (PE), phosphatidylglycerol (PG), phosphatidic acid (PA), phosphatidylserine (PS) and phosphatidylinositol (PI). Favors the release of fatty acid at the sn-1 position for PC or PE and the sn-2 position for PG, PA, PS and PI. Negatively affects disease resistance to the necrotic fungal pathogen Botrytis cinerea and the avirulent bacteria Pseudomonas syringae by promoting cell death and reducing the efficiency of the hypersensitive response, respectively. However, PLP2 contributes to resistance to cucumber mosaic virus (CMV), an obligate parasite inducing hypersensitive response. May negatively regulate oxylipin production, possibly via participating in membrane repair that includes removal of oxidatively modified lipids. The chain is Patatin-like protein 2 (PLP2) from Arabidopsis thaliana (Mouse-ear cress).